The sequence spans 348 residues: Dehydrogenase orsE (348 aa).

An NADP(+)-binding site is contributed by 43–46 (LDTH). A substrate-binding site is contributed by 130–137 (FAVEAAVC). NADP(+)-binding positions include 180-183 (SSSV), 203-206 (GAHN), and 272-273 (VH). Position 292–296 (292–296 (NDIAT)) interacts with substrate. 339–340 (VS) provides a ligand contact to NADP(+).

Belongs to the zinc-containing alcohol dehydrogenase family. Monomer.

In terms of biological role, dehydrogenase; part of the gene cluster that mediates the biosynthesis of orsellinic acid, as well as of the cathepsin K inhibitors F9775 A and F9775 B. The non-reducing polyketide synthase orsA produces orsellinic acid by condensing acetyl-CoA with 3 malonyl-CoA units. Further modifications by the decarboxylase orsB and the tyrosinase-like protein orsC lead to the production of F9775 A and F9775 B. The functions of orsD and orsE remain unclear since only orsB and orsC are required to convert orsellinic acid into F9775 A and F9775 B. The protein is Dehydrogenase orsE of Emericella nidulans (strain FGSC A4 / ATCC 38163 / CBS 112.46 / NRRL 194 / M139) (Aspergillus nidulans).